The chain runs to 441 residues: Asparagine--tRNA ligase, mitochondrial (441 aa).

It belongs to the class-II aminoacyl-tRNA synthetase family.

The protein resides in the mitochondrion. The enzyme catalyses tRNA(Asn) + L-asparagine + ATP = L-asparaginyl-tRNA(Asn) + AMP + diphosphate + H(+). The polypeptide is Asparagine--tRNA ligase, mitochondrial (slm5) (Schizosaccharomyces pombe (strain 972 / ATCC 24843) (Fission yeast)).